The following is a 216-amino-acid chain: MSSWKSQRRIWDISQTLRPGLPIWPGDTEFGFERTWRMDEGSPVNVGRMTMSTHSGTHGDAPLHYAEDGLDAASMELDSYIGECLVVDARGVSGEIDVADLPHIESADRVLFRQWDSFPHDEWRSDWLPIAAETVEWLALQGVKLIGTDAPSVDPQESKTMSAHKAVLKHDMRILEGLVLDDVPEGRYELLALPLKIVDGDAGLCRAILRELPDAG.

Trp24 contacts substrate. The Zn(2+) site is built by His54, His58, and Asp60. Residue His64 is the Proton donor/acceptor of the active site. Zn(2+) is bound by residues His164 and Glu176.

It belongs to the Cyclase 1 superfamily. KynB family. In terms of assembly, homodimer. Zn(2+) serves as cofactor.

The catalysed reaction is N-formyl-L-kynurenine + H2O = L-kynurenine + formate + H(+). It participates in amino-acid degradation; L-tryptophan degradation via kynurenine pathway; L-kynurenine from L-tryptophan: step 2/2. Functionally, catalyzes the hydrolysis of N-formyl-L-kynurenine to L-kynurenine, the second step in the kynurenine pathway of tryptophan degradation. The chain is Kynurenine formamidase from Erythrobacter litoralis (strain HTCC2594).